Here is a 514-residue protein sequence, read N- to C-terminus: 2,3-bisphosphoglycerate-independent phosphoglycerate mutase (514 aa).

Mn(2+)-binding residues include Asp14 and Ser64. Catalysis depends on Ser64, which acts as the Phosphoserine intermediate. Substrate contacts are provided by residues His125, 155–156 (RD), Arg187, Arg193, 263–266 (RADR), and Lys336. 5 residues coordinate Mn(2+): Asp403, His407, Asp444, His445, and His463.

The protein belongs to the BPG-independent phosphoglycerate mutase family. As to quaternary structure, monomer. Requires Mn(2+) as cofactor.

The catalysed reaction is (2R)-2-phosphoglycerate = (2R)-3-phosphoglycerate. Its pathway is carbohydrate degradation; glycolysis; pyruvate from D-glyceraldehyde 3-phosphate: step 3/5. With respect to regulation, insensitive to vanadate. Functionally, catalyzes the interconversion of 2-phosphoglycerate (2-PGA) and 3-phosphoglycerate (3-PGA). The polypeptide is 2,3-bisphosphoglycerate-independent phosphoglycerate mutase (Escherichia coli (strain K12)).